A 294-amino-acid polypeptide reads, in one-letter code: Diaminopimelate epimerase (294 aa).

Residues asparagine 11 and asparagine 78 each contribute to the substrate site. Catalysis depends on cysteine 87, which acts as the Proton donor. Substrate is bound by residues 88-89, asparagine 167, asparagine 203, and 221-222; these read GN and ER. The Proton acceptor role is filled by cysteine 230. 231–232 contributes to the substrate binding site; the sequence is GT.

This sequence belongs to the diaminopimelate epimerase family. As to quaternary structure, homodimer.

The protein localises to the cytoplasm. It carries out the reaction (2S,6S)-2,6-diaminopimelate = meso-2,6-diaminopimelate. It participates in amino-acid biosynthesis; L-lysine biosynthesis via DAP pathway; DL-2,6-diaminopimelate from LL-2,6-diaminopimelate: step 1/1. Catalyzes the stereoinversion of LL-2,6-diaminopimelate (L,L-DAP) to meso-diaminopimelate (meso-DAP), a precursor of L-lysine and an essential component of the bacterial peptidoglycan. In Mycobacterium avium (strain 104), this protein is Diaminopimelate epimerase.